A 1171-amino-acid chain; its full sequence is Putative tricorn protease homolog 2 (1171 aa).

The disordered stretch occupies residues 432–498 (AGYPPDAGDE…GSPGTPATAG (67 aa)). Low complexity-rich tracts occupy residues 444 to 456 (AGTA…APDA) and 466 to 498 (IAAG…ATAG). The active-site Charge relay system is the His827. Positions 842–941 (YQRWQGLLGA…RVAVVPLVDE (100 aa)) are PDZ-like. Residue 1002-1004 (AGG) coordinates substrate. The active-site Nucleophile is Ser1051. 1079 to 1081 (GMT) lines the substrate pocket. Glu1109 functions as the Charge relay system in the catalytic mechanism. The interval 1149-1171 (PPATPPGYEAVPDRSRPPLPPRE) is disordered. The span at 1159–1171 (VPDRSRPPLPPRE) shows a compositional bias: basic and acidic residues.

This sequence belongs to the peptidase S41B family.

The protein localises to the cytoplasm. Functionally, degrades oligopeptides in a sequential manner. In Streptomyces coelicolor (strain ATCC BAA-471 / A3(2) / M145), this protein is Putative tricorn protease homolog 2 (tri2).